Here is a 274-residue protein sequence, read N- to C-terminus: Large ribosomal subunit protein uL2 (274 aa).

Residues 200-274 are disordered; the sequence is HALEKSGKAG…SKYIIERRKK (75 aa). 2 stretches are compositionally biased toward basic residues: residues 207 to 220 and 255 to 274; these read KAGR…RPRN and LKTR…RRKK.

This sequence belongs to the universal ribosomal protein uL2 family. Part of the 50S ribosomal subunit. Forms a bridge to the 30S subunit in the 70S ribosome.

One of the primary rRNA binding proteins. Required for association of the 30S and 50S subunits to form the 70S ribosome, for tRNA binding and peptide bond formation. It has been suggested to have peptidyltransferase activity; this is somewhat controversial. Makes several contacts with the 16S rRNA in the 70S ribosome. The polypeptide is Large ribosomal subunit protein uL2 (Parabacteroides distasonis (strain ATCC 8503 / DSM 20701 / CIP 104284 / JCM 5825 / NCTC 11152)).